Here is a 415-residue protein sequence, read N- to C-terminus: Stimulator of interferon genes protein (415 aa).

The TIR domain occupies 29-163 (HVYHAFISYC…DIIQAISKPE (135 aa)). Glu104 is an active-site residue. A 2',3'-cGAMP-binding site is contributed by Arg256. The tract at residues 387-415 (KSPSSTNMVKSEPNIYREESGKTKSVERG) is disordered. The span at 401-415 (IYREESGKTKSVERG) shows a compositional bias: basic and acidic residues.

The protein in the N-terminal section; belongs to the Toll-like receptor family. In the C-terminal section; belongs to the TMEM173 family. Homodimer.

The catalysed reaction is NAD(+) + H2O = ADP-D-ribose + nicotinamide + H(+). In terms of biological role, sensor of cytosolic DNA from bacteria and viruses that promotes autophagy. Binds c-di-AMP, 2'3'-cGAMP, 3'3'-cGAMP and to a lesser extent c-di-GMP. Nucleotide binding has not been seen to stimulate NAD(+) hydrolase activity. This is Stimulator of interferon genes protein from Magallana gigas (Pacific oyster).